Reading from the N-terminus, the 156-residue chain is Aspartate carbamoyltransferase regulatory chain (156 aa).

4 residues coordinate Zn(2+): Cys107, Cys112, Cys137, and Cys140.

It belongs to the PyrI family. Contains catalytic and regulatory chains. Zn(2+) serves as cofactor.

Involved in allosteric regulation of aspartate carbamoyltransferase. This Methanopyrus kandleri (strain AV19 / DSM 6324 / JCM 9639 / NBRC 100938) protein is Aspartate carbamoyltransferase regulatory chain.